The primary structure comprises 658 residues: MTQLTTGKATPHGATYDGHGVNFTLFSAHAERVELCVFDAQGNEVRFDLPGRSGDVWHGYLADARPGLRYGYRVHGPWQPAAGHRFNPAKLLIDPCARRVEGDLHDNPLFHAGYETPDSRDNATIAPKCVVVSDSYNWEDDAPPRTPWGNTVIYEAHVKGLTYQHPEIPAEIRGRYKALGHPVMINYFKRLGITALELMPVIHFASEPRLQRLGLTNYWGYNPMAMFALHPVYACSPESALDEFRDAVKELHKAGIEVILDIVINHSAELDLDGPMFSLRGIDNRSYYWIKEDGDYHNWTGCGNTLNLSNPGVMEYALECLRYWVETCHVDGFRFDLASVMGRTPAFRQDAPLFTAIQNCPVLSQVKLIAEPWDIGEGGYQVGNFPPLFAEWNDHFRDATRRFWLQRNLSLGDFAGRFAGSSDVFNRNGRLPGASINLVTAHDGFTLRDCVCFTNKHNEANGEENRDGSNNNHSNNHGKEGLGGSLDLIERRRDSVHALLTTLLLSQGTPMLLAGDEHGHSQHGNNNAYCQDNALTWLDWERANNGLTDFTAALIHLRQQIPALTRNQWWQENDGNVRWLNKDGQVLSVEEWQHGMTCMQIMLSDRWLIALNATPHLVDIVLPEGEWRAIPPFAGEDNPVVLEVWHGSAHGLCVFQKS.

Catalysis depends on aspartate 336, which acts as the Nucleophile. Glutamate 371 serves as the catalytic Proton donor. The segment at alanine 460–glycine 484 is disordered.

It belongs to the glycosyl hydrolase 13 family.

It carries out the reaction Hydrolysis of (1-&gt;6)-alpha-D-glucosidic linkages to branches with degrees of polymerization of three or four glucose residues in limit dextrin.. It functions in the pathway glycan degradation; glycogen degradation. Removes maltotriose and maltotetraose chains that are attached by 1,6-alpha-linkage to the limit dextrin main chain, generating a debranched limit dextrin. The chain is Glycogen debranching enzyme from Escherichia fergusonii (strain ATCC 35469 / DSM 13698 / CCUG 18766 / IAM 14443 / JCM 21226 / LMG 7866 / NBRC 102419 / NCTC 12128 / CDC 0568-73).